Reading from the N-terminus, the 301-residue chain is Mitochondrial thiamine pyrophosphate carrier 1 (301 aa).

Solcar repeat units lie at residues 15 to 102 (VTPT…ISKS), 115 to 200 (SSAN…AREL), and 206 to 293 (RVPF…SLSF). A run of 6 helical transmembrane segments spans residues 20–38 (ALVA…TAPL), 79–99 (VPAE…YSII), 121–141 (LIVG…FDLL), 172–192 (IYAG…LMFW), 207–227 (VPFI…GITF), and 252–272 (IFVT…FGIS).

The protein belongs to the mitochondrial carrier (TC 2.A.29) family.

The protein resides in the mitochondrion inner membrane. Functionally, mitochondrial transporter that mediates uptake of thiamine pyrophosphate (ThPP) into mitochondria. In Candida albicans (strain SC5314 / ATCC MYA-2876) (Yeast), this protein is Mitochondrial thiamine pyrophosphate carrier 1 (TPC1).